The sequence spans 23 residues: Gastrin-releasing peptide (23 aa).

A Methionine amide modification is found at methionine 23.

This sequence belongs to the bombesin/neuromedin-B/ranatensin family.

Its subcellular location is the secreted. It localises to the cytoplasmic vesicle. The protein resides in the secretory vesicle lumen. Stimulates the release of gastrin and other gastrointestinal hormones. This chain is Gastrin-releasing peptide (grp), found in Oncorhynchus mykiss (Rainbow trout).